The following is a 414-amino-acid chain: Protein FAM81B (414 aa).

Residues M1 to P13 are compositionally biased toward polar residues. The interval M1–P43 is disordered. 4 coiled-coil regions span residues N70–A94, L121–A149, K188–T223, and L266–S414.

Belongs to the FAM81 family.

This is Protein FAM81B (FAM81B) from Bos taurus (Bovine).